Reading from the N-terminus, the 484-residue chain is Glycogen synthase (484 aa).

K21 lines the ADP-alpha-D-glucose pocket.

This sequence belongs to the glycosyltransferase 1 family. Bacterial/plant glycogen synthase subfamily.

The catalysed reaction is [(1-&gt;4)-alpha-D-glucosyl](n) + ADP-alpha-D-glucose = [(1-&gt;4)-alpha-D-glucosyl](n+1) + ADP + H(+). It functions in the pathway glycan biosynthesis; glycogen biosynthesis. Synthesizes alpha-1,4-glucan chains using ADP-glucose. This chain is Glycogen synthase, found in Pseudomonas syringae pv. tomato (strain ATCC BAA-871 / DC3000).